Consider the following 101-residue polypeptide: Small ribosomal subunit protein eS24 (101 aa).

Belongs to the eukaryotic ribosomal protein eS24 family.

The sequence is that of Small ribosomal subunit protein eS24 from Methanocaldococcus jannaschii (strain ATCC 43067 / DSM 2661 / JAL-1 / JCM 10045 / NBRC 100440) (Methanococcus jannaschii).